A 721-amino-acid chain; its full sequence is Polyribonucleotide nucleotidyltransferase (721 aa).

Positions 495 and 501 each coordinate Mg(2+). Positions 562-621 (PRLLSFRIDPELIGTVIGPGGRTIKNITERTNTKIDIEDSGIVTIASHDGAAAEEAQKII) constitute a KH domain. The S1 motif domain maps to 631-699 (GEVFTGSITR…NRGRINLTLR (69 aa)). The disordered stretch occupies residues 700-721 (GVPQSGESADSQPAPTPVAPLS).

Belongs to the polyribonucleotide nucleotidyltransferase family. Mg(2+) serves as cofactor.

The protein localises to the cytoplasm. It catalyses the reaction RNA(n+1) + phosphate = RNA(n) + a ribonucleoside 5'-diphosphate. Involved in mRNA degradation. Catalyzes the phosphorolysis of single-stranded polyribonucleotides processively in the 3'- to 5'-direction. In Synechococcus sp. (strain CC9311), this protein is Polyribonucleotide nucleotidyltransferase.